We begin with the raw amino-acid sequence, 206 residues long: Superoxide dismutase [Mn] (206 aa).

Positions 27, 82, 168, and 172 each coordinate Mn(2+).

The protein belongs to the iron/manganese superoxide dismutase family. The cofactor is Mn(2+).

The catalysed reaction is 2 superoxide + 2 H(+) = H2O2 + O2. Functionally, destroys superoxide anion radicals which are normally produced within the cells and which are toxic to biological systems. This Lactococcus lactis subsp. lactis (strain IL1403) (Streptococcus lactis) protein is Superoxide dismutase [Mn] (sodA).